The chain runs to 331 residues: tRNA-modifying protein YgfZ (331 aa).

Residues tryptophan 28 and tryptophan 191 each coordinate folate.

This sequence belongs to the tRNA-modifying YgfZ family.

It localises to the cytoplasm. Its function is as follows. Folate-binding protein involved in regulating the level of ATP-DnaA and in the modification of some tRNAs. It is probably a key factor in regulatory networks that act via tRNA modification, such as initiation of chromosomal replication. This chain is tRNA-modifying protein YgfZ, found in Edwardsiella ictaluri (strain 93-146).